Consider the following 29-residue polypeptide: ShK homolog Ask132958 (29 aa).

The ShKT domain occupies 1-29; it reads CENTISGCSRADCLLTHRKQGCQKTCGLC. 3 disulfides stabilise this stretch: C1/C29, C8/C22, and C13/C26.

Belongs to the sea anemone type 1 potassium channel toxin family. Type 1a subfamily.

Its subcellular location is the secreted. The protein resides in the nematocyst. Functionally, this peptide is similar to the potassium channel toxin ShK, but does not show activity on potassium channels. It appears that Lys-19, which is expected to occupy the pore of the channel, is not sufficiently accessible for binding, and therefore that this peptide must have a distinct functional role that does not involve potassium channels. It is noteworthy that this peptide is much more stable in the presence of trypsin, chymotrypsin and pepsin than the toxin ShK. This chain is ShK homolog Ask132958, found in Anemonia sulcata (Mediterranean snakelocks sea anemone).